Consider the following 35-residue polypeptide: Photosystem II reaction center protein T (35 aa).

Residues 3–23 (ALVYTFLLVSTLGIIFFAIFF) form a helical membrane-spanning segment.

This sequence belongs to the PsbT family. In terms of assembly, PSII is composed of 1 copy each of membrane proteins PsbA, PsbB, PsbC, PsbD, PsbE, PsbF, PsbH, PsbI, PsbJ, PsbK, PsbL, PsbM, PsbT, PsbY, PsbZ, Psb30/Ycf12, at least 3 peripheral proteins of the oxygen-evolving complex and a large number of cofactors. It forms dimeric complexes.

The protein localises to the plastid. It localises to the chloroplast thylakoid membrane. Found at the monomer-monomer interface of the photosystem II (PS II) dimer, plays a role in assembly and dimerization of PSII. PSII is a light-driven water plastoquinone oxidoreductase, using light energy to abstract electrons from H(2)O, generating a proton gradient subsequently used for ATP formation. This is Photosystem II reaction center protein T from Asarum canadense (Wild ginger).